The chain runs to 184 residues: dTTP/UTP pyrophosphatase (184 aa).

Catalysis depends on Asp-65, which acts as the Proton acceptor.

It belongs to the Maf family. YhdE subfamily. A divalent metal cation serves as cofactor.

The protein localises to the cytoplasm. The catalysed reaction is dTTP + H2O = dTMP + diphosphate + H(+). The enzyme catalyses UTP + H2O = UMP + diphosphate + H(+). Its function is as follows. Nucleoside triphosphate pyrophosphatase that hydrolyzes dTTP and UTP. May have a dual role in cell division arrest and in preventing the incorporation of modified nucleotides into cellular nucleic acids. The sequence is that of dTTP/UTP pyrophosphatase from Thermococcus onnurineus (strain NA1).